The following is a 138-amino-acid chain: Acidic phospholipase A2 Tpu-E6a (138 aa).

Positions 1 to 16 are cleaved as a signal peptide; sequence MRTLWIMAVLLLGVKG. 7 disulfide bridges follow: Cys42–Cys131, Cys44–Cys60, Cys59–Cys111, Cys65–Cys138, Cys66–Cys104, Cys73–Cys97, and Cys91–Cys102. 3 residues coordinate Ca(2+): Tyr43, Gly45, and Gly47. His63 is an active-site residue. Residue Asp64 coordinates Ca(2+). Residue Asp105 is part of the active site.

As to quaternary structure, monomer. Ca(2+) is required as a cofactor. Expressed by the venom gland.

Its subcellular location is the secreted. It carries out the reaction a 1,2-diacyl-sn-glycero-3-phosphocholine + H2O = a 1-acyl-sn-glycero-3-phosphocholine + a fatty acid + H(+). Functionally, snake venom phospholipase A2 (PLA2) that impairs hemostasis. It weakly inhibits ADP-induced platelet aggregation when tested on platelet rich plasma from human and rabbit blood (15-25% of inhibition at 5-10 ug of enzyme), and dose-dependently inhibits blood coagulation, possibly by inhibiting thrombin activation. Exhibits high hydrolytic activities toward L-dipalmitoyl phosphatidylcholine. PLA2 catalyzes the calcium-dependent hydrolysis of the 2-acyl groups in 3-sn-phosphoglycerides. The chain is Acidic phospholipase A2 Tpu-E6a from Craspedocephalus puniceus (Flat-nosed pitviper).